The chain runs to 313 residues: Cilia- and flagella-associated protein 36 (313 aa).

2 positions are modified to phosphoserine: serine 85 and serine 147. Positions serine 147–glutamate 187 form a coiled coil. Disordered regions lie at residues lysine 165–aspartate 204 and lysine 262–glutamate 292. Residues glutamine 179–proline 189 show a composition bias toward basic and acidic residues. Residues alanine 192–glycine 203 show a composition bias toward polar residues. Serine 201 is subject to Phosphoserine. The segment covering glutamine 271 to glutamate 292 has biased composition (basic and acidic residues).

Belongs to the CFAP36 family. As to quaternary structure, interacts with ARL3.

The protein resides in the nucleus. It is found in the cytoplasm. The protein localises to the cell projection. It localises to the cilium. Its subcellular location is the flagellum. Its function is as follows. May act as an effector for ARL3. The protein is Cilia- and flagella-associated protein 36 of Bos taurus (Bovine).